The primary structure comprises 209 residues: COP9 signalosome complex subunit 8 (209 aa).

The PCI domain occupies 8–179 (ESAFSFKKLL…GALDVSFNKF (172 aa)). At S175 the chain carries Phosphoserine.

The protein belongs to the CSN8 family. As to quaternary structure, component of the CSN complex, composed of COPS1/GPS1, COPS2, COPS3, COPS4, COPS5, COPS6, COPS7 (COPS7A or COPS7B), COPS8 and COPS9. In the complex, it probably interacts directly with COPS3, COPS4 and COPS7 (COPS7A or COPS7B).

The protein localises to the cytoplasm. It localises to the nucleus. Functionally, component of the COP9 signalosome complex (CSN), a complex involved in various cellular and developmental processes. The CSN complex is an essential regulator of the ubiquitin (Ubl) conjugation pathway by mediating the deneddylation of the cullin subunits of SCF-type E3 ligase complexes, leading to decrease the Ubl ligase activity of SCF-type complexes such as SCF, CSA or DDB2. The complex is also involved in phosphorylation of p53/TP53, c-jun/JUN, IkappaBalpha/NFKBIA, ITPK1 and IRF8/ICSBP, possibly via its association with CK2 and PKD kinases. CSN-dependent phosphorylation of TP53 and JUN promotes and protects degradation by the Ubl system, respectively. The sequence is that of COP9 signalosome complex subunit 8 (COPS8) from Pongo abelii (Sumatran orangutan).